The following is a 188-amino-acid chain: dCTP deaminase (188 aa).

109–114 (KSTYAR) contributes to the dCTP binding site. The active-site Proton donor/acceptor is the glutamate 135. DCTP-binding residues include glutamine 154, tyrosine 168, and glutamine 178.

It belongs to the dCTP deaminase family. In terms of assembly, homotrimer.

It carries out the reaction dCTP + H2O + H(+) = dUTP + NH4(+). It functions in the pathway pyrimidine metabolism; dUMP biosynthesis; dUMP from dCTP (dUTP route): step 1/2. Its function is as follows. Catalyzes the deamination of dCTP to dUTP. The chain is dCTP deaminase from Helicobacter hepaticus (strain ATCC 51449 / 3B1).